Here is a 76-residue protein sequence, read N- to C-terminus: Bomanin Tailed 2 (76 aa).

Positions 1–22 (MKALQVAGTLMLLFCLLAAVNA) are cleaved as a signal peptide. Residues 23-24 (TP) constitute a propeptide, removed by a dipeptidylpeptidase. An intrachain disulfide couples Cys33 to Cys36.

It belongs to the bomanin family.

The protein resides in the secreted. Secreted immune-induced peptide induced by Toll signaling. Has a role in resistance to bacterial and fungal infections. The strength of antimicrobial activity appears to correlate with the overall level of expression. The sequence is that of Bomanin Tailed 2 from Drosophila melanogaster (Fruit fly).